The sequence spans 140 residues: Actin-depolymerizing factor 8 (140 aa).

A Phosphoserine modification is found at Ser6. The 133-residue stretch at 7-139 (GMHVNDECKI…SLDIIKGRLN (133 aa)) folds into the ADF-H domain.

The protein belongs to the actin-binding proteins ADF family. In terms of tissue distribution, expressed in the root trichoblast cells and developed root hairs.

It is found in the cytoplasm. The protein localises to the cytoskeleton. Actin-depolymerizing protein. Severs actin filaments (F-actin) and binds to actin monomers. This chain is Actin-depolymerizing factor 8 (ADF8), found in Arabidopsis thaliana (Mouse-ear cress).